Reading from the N-terminus, the 232-residue chain is MTNADPHELQKFSDLAHRWWDPNAEFKPLHELNPIRLKWIDAHAHLAGKTVLDIGCGGGILSESMAGLGAHVKGIDLSTQALGVADLHSLESGVTVDYEEIAAEALAAREPAKYDVVTCMEMLEHVPQPAAIVEACKTLVKPGGWVFFSTLNRNVKSYLFAVIGAEYIARMLPKGTHDYARFIRPSELASFVRAADLRTADIKGIVYNPLSKHFMLSADTSVNYMLACRRDV.

S-adenosyl-L-methionine-binding residues include arginine 36, glycine 55, aspartate 76, and methionine 120.

This sequence belongs to the methyltransferase superfamily. UbiG/COQ3 family.

The catalysed reaction is a 3-demethylubiquinol + S-adenosyl-L-methionine = a ubiquinol + S-adenosyl-L-homocysteine + H(+). It carries out the reaction a 3-(all-trans-polyprenyl)benzene-1,2-diol + S-adenosyl-L-methionine = a 2-methoxy-6-(all-trans-polyprenyl)phenol + S-adenosyl-L-homocysteine + H(+). It functions in the pathway cofactor biosynthesis; ubiquinone biosynthesis. Its function is as follows. O-methyltransferase that catalyzes the 2 O-methylation steps in the ubiquinone biosynthetic pathway. This chain is Ubiquinone biosynthesis O-methyltransferase, found in Paraburkholderia phytofirmans (strain DSM 17436 / LMG 22146 / PsJN) (Burkholderia phytofirmans).